Here is a 463-residue protein sequence, read N- to C-terminus: Formate-nitrite transporter 2 (463 aa).

The Cytoplasmic segment spans residues 1–100 (MCSIPPLRLL…VKKTQLRIDR (100 aa)). A helical membrane pass occupies residues 101 to 121 (LLLQAFMAGIFVAMAGHCCTV). Residues 122–142 (LAGSYPTDPGDPLAVAKPTQK) are Extracellular-facing. Residues 143–163 (FIYGALFPVAFICIILTGAEL) traverse the membrane as a helical segment. Residues 164 to 189 (FTGNTMTMLICYFQKRVTMLQLGVNW) lie on the Cytoplasmic side of the membrane. A helical membrane pass occupies residues 190–210 (LGSLAGNWLGALFGAYFLSYL). Over 211-237 (TGALGDEHVRQFLFRTCVNKISYGWGE) the chain is Extracellular. A helical transmembrane segment spans residues 238–258 (CFLRGVGCNTFVCLAVWAVIA). The Cytoplasmic segment spans residues 259–265 (SENVAGK). The helical transmembrane segment at 266–286 (VLVMWFPIVAFCVGGYEHIIA) threads the bilayer. Topologically, residues 287–305 (NMYTLQAGLMAGAPVAILD) are extracellular. The chain crosses the membrane as a helical span at residues 306–326 (VIAFNFLPTLLGNIVGGCLLV). Residues 327–463 (GAVYAYNFYP…QTAESVAQQV (137 aa)) lie on the Cytoplasmic side of the membrane. A disordered region spans residues 424–463 (SGNLSTHARLDLPNRPVEPPSDGLEVTPQSQTAESVAQQV). Polar residues predominate over residues 450–463 (TPQSQTAESVAQQV).

The protein belongs to the FNT transporter (TC 1.A.16) family. As to quaternary structure, homopentamer.

It is found in the cell membrane. The enzyme catalyses (S)-lactate(in) + H(+)(in) = (S)-lactate(out) + H(+)(out). It carries out the reaction formate(in) + H(+)(in) = formate(out) + H(+)(out). It catalyses the reaction pyruvate(out) + H(+)(out) = pyruvate(in) + H(+)(in). The catalysed reaction is acetate(out) + H(+)(out) = acetate(in) + H(+)(in). Inhibited by p-chloromercuribenzene sulfonate (pCMBS). Methyl methanethiosulfonate (MMTS) inhibits L-lactate but not formate transport. Inhibited by the Malaria Box compound MMV007839. Inhibited by BH-296, BH-317, BH-326 and BH-388 compounds. Its function is as follows. Monocarboxylate-proton symporter; active in acidic-to-neutral pH range. Transports L-lactate and formate. The chain is Formate-nitrite transporter 2 from Toxoplasma gondii (strain ATCC 50611 / Me49).